We begin with the raw amino-acid sequence, 104 residues long: Protein E7 (104 aa).

The interval 1-47 (MHGNIINIEDVILDLVPQPEIDLRCYEQLDYEQFDSSDEDETDNMRD) is E7 terminal domain. The short motif at 23–27 (LRCYE) is the LXCXE motif; interaction with host RB1 and TMEM173/STING element. Residues 65–101 (CCMCNSIVQLAVQSSRQNVRVLEQMLMEDVSLVCHQC) fold into a zinc finger. Residues 83–91 (VRVLEQMLM) carry the Nuclear export signal motif.

It belongs to the papillomaviridae E7 protein family. In terms of assembly, homodimer. Homooligomer. Interacts with host RB1; this interaction induces dissociation of RB1-E2F1 complex thereby disrupting RB1 activity. Interacts with host EP300; this interaction represses EP300 transcriptional activity. Interacts with protein E2; this interaction inhibits E7 oncogenic activity. Interacts with host TMEM173/STING; this interaction impairs the ability of TMEM173/STING to sense cytosolic DNA and promote the production of type I interferon (IFN-alpha and IFN-beta). Post-translationally, highly phosphorylated.

The protein localises to the host cytoplasm. The protein resides in the host nucleus. Plays a role in viral genome replication by driving entry of quiescent cells into the cell cycle. Stimulation of progression from G1 to S phase allows the virus to efficiently use the cellular DNA replicating machinery to achieve viral genome replication. E7 protein has both transforming and trans-activating activities. Induces the disassembly of the E2F1 transcription factor from RB1, with subsequent transcriptional activation of E2F1-regulated S-phase genes. Interferes with host histone deacetylation mediated by HDAC1 and HDAC2, leading to transcription activation. Also plays a role in the inhibition of both antiviral and antiproliferative functions of host interferon alpha. Interaction with host TMEM173/STING impairs the ability of TMEM173/STING to sense cytosolic DNA and promote the production of type I interferon (IFN-alpha and IFN-beta). In Human papillomavirus type 26, this protein is Protein E7.